The following is a 154-amino-acid chain: Iron-sulfur cluster assembly enzyme IscU (154 aa).

The protein belongs to the NifU family. Component of the mitochondrial core iron-sulfur cluster (ISC) assembly complex at least composed of the cystein desulfurase Nfs1, the scaffold protein IscU, the accessory protein bcn92/Isd11/Lyrm4, and probably fh/frataxin. Interacts with Nfs1. Fe(2+) is required as a cofactor. Requires [2Fe-2S] cluster as cofactor.

The protein operates within cofactor biosynthesis; iron-sulfur cluster biosynthesis. Functionally, scaffold protein for the de novo synthesis of iron-sulfur (Fe-S) clusters within mitochondria, which is required for maturation of both mitochondrial and cytoplasmic [2Fe-2S] and [4Fe-4S] proteins. Component of the mitochondrial core iron-sulfur cluster (ISC) assembly complex; regulates its activity. The sequence is that of Iron-sulfur cluster assembly enzyme IscU from Drosophila melanogaster (Fruit fly).